A 504-amino-acid polypeptide reads, in one-letter code: Glycerol kinase (504 aa).

T12 serves as a coordination point for ADP. T12, T13, and S14 together coordinate ATP. T12 provides a ligand contact to sn-glycerol 3-phosphate. R16 lines the ADP pocket. 4 residues coordinate sn-glycerol 3-phosphate: R82, E83, Y134, and D246. Positions 82, 83, 134, 246, and 247 each coordinate glycerol. Residues T268 and G312 each contribute to the ADP site. Positions 268, 312, 316, and 413 each coordinate ATP. ADP-binding residues include G413 and N417.

It belongs to the FGGY kinase family.

It catalyses the reaction glycerol + ATP = sn-glycerol 3-phosphate + ADP + H(+). The protein operates within polyol metabolism; glycerol degradation via glycerol kinase pathway; sn-glycerol 3-phosphate from glycerol: step 1/1. Inhibited by fructose 1,6-bisphosphate (FBP). In terms of biological role, key enzyme in the regulation of glycerol uptake and metabolism. Catalyzes the phosphorylation of glycerol to yield sn-glycerol 3-phosphate. This chain is Glycerol kinase, found in Paenarthrobacter aurescens (strain TC1).